A 101-amino-acid polypeptide reads, in one-letter code: Pterin-4-alpha-carbinolamine dehydratase (101 aa).

This sequence belongs to the pterin-4-alpha-carbinolamine dehydratase family.

The catalysed reaction is (4aS,6R)-4a-hydroxy-L-erythro-5,6,7,8-tetrahydrobiopterin = (6R)-L-erythro-6,7-dihydrobiopterin + H2O. In Drosophila virilis (Fruit fly), this protein is Pterin-4-alpha-carbinolamine dehydratase (Pcd).